A 358-amino-acid polypeptide reads, in one-letter code: Ribosomal RNA-processing protein 8 (358 aa).

The interval 1-81 is disordered; the sequence is MKPFEVPPWE…PQDSSDDDYE (81 aa). Over residues 30–44 the composition is skewed to basic residues; that stretch reads AKKKPKKKKPKKKKA. Phosphoserine is present on residues Ser75 and Ser76. Residues His185, Gly220, Asp238, and Cys267 each coordinate S-adenosyl-L-methionine.

The protein belongs to the methyltransferase superfamily. RRP8 family.

The protein localises to the nucleus. It localises to the nucleolus. In terms of biological role, probable methyltransferase required to silence rDNA. This is Ribosomal RNA-processing protein 8 from Drosophila melanogaster (Fruit fly).